A 256-amino-acid polypeptide reads, in one-letter code: Probable ribosomal RNA small subunit methyltransferase A (256 aa).

Residues histidine 8, leucine 10, glycine 34, glutamate 55, aspartate 83, and asparagine 98 each coordinate S-adenosyl-L-methionine.

The protein belongs to the class I-like SAM-binding methyltransferase superfamily. rRNA adenine N(6)-methyltransferase family. RsmA subfamily.

The protein resides in the cytoplasm. Its function is as follows. Specifically dimethylates two adjacent adenosines in the loop of a conserved hairpin near the 3'-end of 16S rRNA in the 30S particle. May play a critical role in biogenesis of 30S subunits. In Methanospirillum hungatei JF-1 (strain ATCC 27890 / DSM 864 / NBRC 100397 / JF-1), this protein is Probable ribosomal RNA small subunit methyltransferase A.